The primary structure comprises 179 residues: Large ribosomal subunit protein uL5 (179 aa).

This sequence belongs to the universal ribosomal protein uL5 family. Part of the 50S ribosomal subunit; part of the 5S rRNA/L5/L18/L25 subcomplex. Contacts the 5S rRNA and the P site tRNA. Forms a bridge to the 30S subunit in the 70S ribosome.

Its function is as follows. This is one of the proteins that bind and probably mediate the attachment of the 5S RNA into the large ribosomal subunit, where it forms part of the central protuberance. In the 70S ribosome it contacts protein S13 of the 30S subunit (bridge B1b), connecting the 2 subunits; this bridge is implicated in subunit movement. Contacts the P site tRNA; the 5S rRNA and some of its associated proteins might help stabilize positioning of ribosome-bound tRNAs. This Nitrosomonas eutropha (strain DSM 101675 / C91 / Nm57) protein is Large ribosomal subunit protein uL5.